Reading from the N-terminus, the 242-residue chain is N-alpha-acetyltransferase 60 (242 aa).

Residues 1–192 are Cytoplasmic-facing; sequence MTEAVPSSAL…GGHPPWTILD (192 aa). Residues 13-182 form the N-acetyltransferase domain; it reads VSLRLLCHDD…DGFTYVLYIN (170 aa). Tyr-38 is a substrate binding site. Lys-79 is modified (N6-acetyllysine; by autocatalysis). Tyr-97 is a catalytic residue. Leu-99 lines the substrate pocket. 101-103 is a binding site for acetyl-CoA; the sequence is LGV. N6-acetyllysine; by autocatalysis is present on residues Lys-105, Lys-109, and Lys-121. 109 to 114 contributes to the acetyl-CoA binding site; sequence KHGIGS. Residue His-138 is part of the active site. Residues Asn-143 and 150–153 contribute to the acetyl-CoA site; that span reads YENR. Lys-156 is subject to N6-acetyllysine; by autocatalysis. Positions 162–173 are required for homodimerization; it reads PYYYSIRGVLKD. Tyr-165 provides a ligand contact to substrate. An intramembrane region (helical) is located at residues 193-236; the sequence is YIQHLGSALANLSPCSIPHRIYRQAQSLLCSFLPWSSISTKGGI. Over 237 to 242 the chain is Cytoplasmic; sequence EYSRTM.

It belongs to the acetyltransferase family. NAA60 subfamily. As to quaternary structure, monomer and homodimer; monomer in presence of substrate and homodimer in its absence. Acetylated: autoacetylation is required for optimal acetyltransferase activity.

Its subcellular location is the golgi apparatus membrane. It carries out the reaction N-terminal L-methionyl-[transmembrane protein] + acetyl-CoA = N-terminal N(alpha)-acetyl-L-methionyl-[transmembrane protein] + CoA + H(+). It catalyses the reaction L-lysyl-[protein] + acetyl-CoA = N(6)-acetyl-L-lysyl-[protein] + CoA + H(+). Functionally, N-alpha-acetyltransferase that specifically mediates the acetylation of N-terminal residues of the transmembrane proteins, with a strong preference for N-termini facing the cytosol. Displays N-terminal acetyltransferase activity towards a range of N-terminal sequences including those starting with Met-Lys, Met-Val, Met-Ala and Met-Met. Required for normal chromosomal segregation during anaphase. May also show histone acetyltransferase activity; such results are however unclear in vivo and would require additional experimental evidences. This chain is N-alpha-acetyltransferase 60 (NAA60), found in Bos taurus (Bovine).